A 44-amino-acid chain; its full sequence is U4-ctenitoxin-Co1a (44 aa).

Cystine bridges form between C2–C19, C9–C25, C18–C39, and C27–C37.

As to expression, expressed by the venom gland.

It localises to the secreted. Its function is as follows. Omega-agatoxins are antagonists of voltage-gated calcium channels (Cav). Toxic to mice by intracerebroventricular injection. In Ctenus ornatus (Brazilian spider), this protein is U4-ctenitoxin-Co1a.